A 191-amino-acid chain; its full sequence is 2-amino-4-hydroxy-6-hydroxymethyldihydropteridine pyrophosphokinase (191 aa).

This sequence belongs to the HPPK family.

It catalyses the reaction 6-hydroxymethyl-7,8-dihydropterin + ATP = (7,8-dihydropterin-6-yl)methyl diphosphate + AMP + H(+). Its pathway is cofactor biosynthesis; tetrahydrofolate biosynthesis; 2-amino-4-hydroxy-6-hydroxymethyl-7,8-dihydropteridine diphosphate from 7,8-dihydroneopterin triphosphate: step 4/4. Its function is as follows. Catalyzes the transfer of pyrophosphate from adenosine triphosphate (ATP) to 6-hydroxymethyl-7,8-dihydropterin, an enzymatic step in folate biosynthesis pathway. This is 2-amino-4-hydroxy-6-hydroxymethyldihydropteridine pyrophosphokinase (folK) from Mycobacterium leprae (strain TN).